The following is a 294-amino-acid chain: ATP phosphoribosyltransferase (294 aa).

It belongs to the ATP phosphoribosyltransferase family. Long subfamily. Mg(2+) serves as cofactor.

It localises to the cytoplasm. It carries out the reaction 1-(5-phospho-beta-D-ribosyl)-ATP + diphosphate = 5-phospho-alpha-D-ribose 1-diphosphate + ATP. It participates in amino-acid biosynthesis; L-histidine biosynthesis; L-histidine from 5-phospho-alpha-D-ribose 1-diphosphate: step 1/9. With respect to regulation, feedback inhibited by histidine. Functionally, catalyzes the condensation of ATP and 5-phosphoribose 1-diphosphate to form N'-(5'-phosphoribosyl)-ATP (PR-ATP). Has a crucial role in the pathway because the rate of histidine biosynthesis seems to be controlled primarily by regulation of HisG enzymatic activity. The protein is ATP phosphoribosyltransferase of Chlorobium phaeobacteroides (strain DSM 266 / SMG 266 / 2430).